The sequence spans 423 residues: UDP-N-acetylglucosamine 1-carboxyvinyltransferase 1 (423 aa).

A phosphoenolpyruvate-binding site is contributed by 23–24 (KN). Arginine 96 provides a ligand contact to UDP-N-acetyl-alpha-D-glucosamine. Cysteine 120 functions as the Proton donor in the catalytic mechanism. Cysteine 120 carries the post-translational modification 2-(S-cysteinyl)pyruvic acid O-phosphothioketal. Residues 125 to 129 (RPIDL), aspartate 309, and valine 331 each bind UDP-N-acetyl-alpha-D-glucosamine.

This sequence belongs to the EPSP synthase family. MurA subfamily.

The protein resides in the cytoplasm. The catalysed reaction is phosphoenolpyruvate + UDP-N-acetyl-alpha-D-glucosamine = UDP-N-acetyl-3-O-(1-carboxyvinyl)-alpha-D-glucosamine + phosphate. It functions in the pathway cell wall biogenesis; peptidoglycan biosynthesis. Cell wall formation. Adds enolpyruvyl to UDP-N-acetylglucosamine. The protein is UDP-N-acetylglucosamine 1-carboxyvinyltransferase 1 of Streptococcus mutans serotype c (strain ATCC 700610 / UA159).